Reading from the N-terminus, the 366-residue chain is Methylthioribose-1-phosphate isomerase (366 aa).

Asp260 acts as the Proton donor in catalysis.

The protein belongs to the eIF-2B alpha/beta/delta subunits family. MtnA subfamily.

The protein localises to the cytoplasm. Its subcellular location is the nucleus. The catalysed reaction is 5-(methylsulfanyl)-alpha-D-ribose 1-phosphate = 5-(methylsulfanyl)-D-ribulose 1-phosphate. The protein operates within amino-acid biosynthesis; L-methionine biosynthesis via salvage pathway; L-methionine from S-methyl-5-thio-alpha-D-ribose 1-phosphate: step 1/6. Its function is as follows. Catalyzes the interconversion of methylthioribose-1-phosphate (MTR-1-P) into methylthioribulose-1-phosphate (MTRu-1-P). The chain is Methylthioribose-1-phosphate isomerase from Caenorhabditis briggsae.